We begin with the raw amino-acid sequence, 591 residues long: L-lactate dehydrogenase (cytochrome) (591 aa).

The transit peptide at 1-80 (MLKYKPLLKI…LNWHNGQIDN (80 aa)) directs the protein to the mitochondrion. The region spanning 88-165 (KQKISPAEVA…APEKKLGPLQ (78 aa)) is the Cytochrome b5 heme-binding domain. Heme b is bound by residues His-123, His-146, Tyr-177, Gln-219, and Tyr-223. The region spanning 197 to 563 (PPLDNIINLY…KPDLLDLSTL (367 aa)) is the FMN hydroxy acid dehydrogenase domain. Tyr-223 lines the pyruvate pocket. Residues 275–278 (SATA), Ser-308, and Gln-332 each bind FMN. Pyruvate is bound at residue Tyr-334. Residue Thr-360 coordinates FMN. Heme b is bound at residue Lys-376. Lys-429 lines the FMN pocket. Residues His-453 and Arg-456 each contribute to the pyruvate site. Catalysis depends on His-453, which acts as the Proton acceptor. FMN is bound by residues 489–493 (DGGVR) and 512–513 (GR).

In the N-terminal section; belongs to the cytochrome b5 family. It in the C-terminal section; belongs to the FMN-dependent alpha-hydroxy acid dehydrogenase family. As to quaternary structure, homotetramer. Requires FMN as cofactor. It depends on heme b as a cofactor.

The protein localises to the mitochondrion intermembrane space. The catalysed reaction is (S)-lactate + 2 Fe(III)-[cytochrome c] = 2 Fe(II)-[cytochrome c] + pyruvate + 2 H(+). Catalyzes the oxidation of (S)-lactate (L-lactate) to pyruvate with subsequent transfer of electrons to cytochrome c. Is involved in the utilization of (S)-lactate as a sole source of carbon for growth. Can also use ferricyanide as an electron acceptor in vitro. This Saccharomyces cerevisiae (strain ATCC 204508 / S288c) (Baker's yeast) protein is L-lactate dehydrogenase (cytochrome) (CYB2).